The chain runs to 119 residues: Methylglyoxal synthase (119 aa).

Residues 1-119 (MRIALIAHDK…GTADLIIRQF (119 aa)) form the MGS-like domain. Residues histidine 8, lysine 12, 34 to 37 (TGTT), and 54 to 55 (SG) contribute to the substrate site. Aspartate 60 functions as the Proton donor/acceptor in the catalytic mechanism. Residue histidine 87 coordinates substrate.

The protein belongs to the methylglyoxal synthase family.

It carries out the reaction dihydroxyacetone phosphate = methylglyoxal + phosphate. In terms of biological role, catalyzes the formation of methylglyoxal from dihydroxyacetone phosphate. This chain is Methylglyoxal synthase, found in Clostridium botulinum (strain Alaska E43 / Type E3).